A 354-amino-acid polypeptide reads, in one-letter code: Hyaluronan and proteoglycan link protein 1 (354 aa).

The propeptide occupies 1 to 9 (MKSLLLLVL). N-linked (GlcNAc...) asparagine glycosylation is found at N21 and N56. The Ig-like V-type domain occupies 38-152 (PRLLVEAEQA…EGLEDDTAVV (115 aa)). 5 disulfide bridges follow: C61–C139, C181–C252, C205–C226, C279–C349, and C304–C325. 2 Link domains span residues 159 to 254 (VVFP…FCFT) and 259 to 351 (GRFY…YCFR).

It belongs to the HAPLN family.

Its subcellular location is the secreted. The protein resides in the extracellular space. It is found in the extracellular matrix. In terms of biological role, stabilizes the aggregates of proteoglycan monomers with hyaluronic acid in the extracellular cartilage matrix. The protein is Hyaluronan and proteoglycan link protein 1 (HAPLN1) of Sus scrofa (Pig).